A 182-amino-acid polypeptide reads, in one-letter code: uncharacterized protein (182 aa).

Transmembrane regions (helical) follow at residues 76–96 (LLLA…LALA) and 114–130 (LDLL…LIGA).

The protein resides in the membrane. This is an uncharacterized protein from Saccharomyces cerevisiae (strain ATCC 204508 / S288c) (Baker's yeast).